The chain runs to 274 residues: Merozoite surface protein 2 (274 aa).

An N-terminal signal peptide occupies residues 1–20 (MKVIKTLSIINFFIFVTFNI). N-linked (GlcNAc...) asparagine glycosylation is found at Asn-22 and Asn-36. Residues 43–234 (MAESKPPTGT…SDSQKECTDG (192 aa)) form a disordered region. Residues 44–200 (AESKPPTGTG…EQTESPELQS (157 aa)) are polymorphic region. 2 tandem repeats follow at residues 53-62 (GASGSAGSGA) and 63-72 (GASGSAGSGD). Residues 53–72 (GASGSAGSGAGASGSAGSGD) form a 2 X 10 AA tandem repeats of G-A-S-G-S-A-G-S-G-[AD] region. Positions 53 to 72 (GASGSAGSGAGASGSAGSGD) are enriched in gly residues. Over residues 91–121 (SSSTPATTTTTTTTTTTTTTNDAEASTSTSS) the composition is skewed to low complexity. Composition is skewed to polar residues over residues 122–131 (ENPNHNNAET), 140–167 (QKSN…NVPP), and 174–202 (KSPT…QSAP). A glycan (N-linked (GlcNAc...) asparagine) is linked at Asn-151. A glycan (N-linked (GlcNAc...) asparagine) is linked at Asn-223. A disulfide bridge links Cys-231 with Cys-239. N-linked (GlcNAc...) asparagine glycosylation is present at Asn-248. Asn-248 is lipidated: GPI-anchor amidated asparagine. Positions 249–274 (SSNIASINKFVVLISAKLVLSFAIFI) are cleaved as a propeptide — removed in mature form.

The protein resides in the cell membrane. In terms of biological role, may play a role in the merozoite attachment to the erythrocyte. The polypeptide is Merozoite surface protein 2 (Plasmodium falciparum (isolate kf1916)).